We begin with the raw amino-acid sequence, 210 residues long: MLAGLSPHLSNLRRSLTQVLNFALVLSTAFMMWKGLSIYTNSSSPIVVVLSGSMEPAFQRGDLLFLWNRSPRAEVGEIVVYNVRGKDIPIVHRVVRAFGDDEKSPKETNGQKKKKVMSSVKKDSIAAGALHSDSALVSHRILTKGDNNIADDTELYAQGQDYLDRKLDLVGSVRGYIPAVGYVTIMLSEHPWLKTVLLGIMGAMVILQRE.

The Cytoplasmic segment spans residues 1 to 21 (MLAGLSPHLSNLRRSLTQVLN). A helical; Signal-anchor for type II membrane protein membrane pass occupies residues 22–38 (FALVLSTAFMMWKGLSI). The Lumenal portion of the chain corresponds to 39–210 (YTNSSSPIVV…MGAMVILQRE (172 aa)). Asn41 is a glycosylation site (N-linked (GlcNAc...) asparagine). Catalysis depends on charge relay system residues Ser53, His92, and Asp152. Residues 196–207 (VLLGIMGAMVIL) are C-terminal short (CTS) helix.

The protein belongs to the peptidase S26B family. In terms of assembly, component of the signal peptidase complex (SPC) composed of a catalytic subunit SEC11 and three accessory subunits SPC1, SPC2 and SPC3. The complex induces a local thinning of the ER membrane which is used to measure the length of the signal peptide (SP) h-region of protein substrates. This ensures the selectivity of the complex towards h-regions shorter than 18-20 amino acids. SPC associates with the translocon complex.

It is found in the endoplasmic reticulum membrane. It carries out the reaction Cleavage of hydrophobic, N-terminal signal or leader sequences from secreted and periplasmic proteins.. Functionally, catalytic component of the signal peptidase complex (SPC) which catalyzes the cleavage of N-terminal signal sequences from nascent proteins as they are translocated into the lumen of the endoplasmic reticulum. Specifically cleaves N-terminal signal peptides that contain a hydrophobic alpha-helix (h-region) shorter than 18-20 amino acids. This is Signal peptidase complex catalytic subunit SEC11 (SEC11) from Coccidioides posadasii (strain C735) (Valley fever fungus).